The following is a 471-amino-acid chain: Regulator of microtubule dynamics protein 3 (471 aa).

Residues 1–12 (MSRLGALGGSRA) are Mitochondrial intermembrane-facing. A helical transmembrane segment spans residues 13–35 (GLGLLLGTAAGLGFLCVLYSQRW). The Cytoplasmic portion of the chain corresponds to 36 to 471 (KRTQRHGRSQ…LEELEVILGK (436 aa)). Residues serine 44, serine 46, serine 50, and serine 57 each carry the phosphoserine modification. Residues 91 to 125 (LDRLDFVLTSLMALRREVEELQRSLQGLAGEIVGE) adopt a coiled-coil conformation. Residues 157-163 (VYFTASS) carry the FFAT motif. A Phosphothreonine modification is found at threonine 160. Residues 168-203 (TDAESEGGYTTANAESDYERDSDKESEDAEDEVSCE) form a disordered region. 4 positions are modified to phosphoserine: serine 183, serine 193, serine 212, and serine 233. Residues 191 to 201 (KESEDAEDEVS) are compositionally biased toward acidic residues.

The protein belongs to the RMDN family. In terms of assembly, interacts with PTPN2. Interacts with microtubules. Interacts with VAPB. Interacts (via FFAT motif) with MOSPD2 (via MSP domain). Interacts (via phosphorylated FFAT motif) with MOSPD2, VAPA and VAPB. Post-translationally, phosphorylation at Thr-160 of the FFAT motif activates interaction with MOSPD2, VAPA and VAPB.

The protein resides in the mitochondrion outer membrane. The protein localises to the cytoplasm. Its subcellular location is the nucleus. It localises to the cytoskeleton. It is found in the spindle. The protein resides in the spindle pole. Functionally, involved in cellular calcium homeostasis regulation. May participate in differentiation and apoptosis of keratinocytes. Overexpression induces apoptosis. This is Regulator of microtubule dynamics protein 3 from Rattus norvegicus (Rat).